A 492-amino-acid polypeptide reads, in one-letter code: 3-octaprenyl-4-hydroxybenzoate carboxy-lyase (492 aa).

Asn175 contacts Mn(2+). Prenylated FMN is bound by residues Ile178 to Arg180, Arg192 to Leu194, and Arg197 to Gly198. Glu241 lines the Mn(2+) pocket. The active-site Proton donor is Asp290.

This sequence belongs to the UbiD family. Homohexamer. The cofactor is prenylated FMN. Mn(2+) is required as a cofactor.

It localises to the cell membrane. The enzyme catalyses a 4-hydroxy-3-(all-trans-polyprenyl)benzoate + H(+) = a 2-(all-trans-polyprenyl)phenol + CO2. It functions in the pathway cofactor biosynthesis; ubiquinone biosynthesis. Functionally, catalyzes the decarboxylation of 3-octaprenyl-4-hydroxy benzoate to 2-octaprenylphenol, an intermediate step in ubiquinone biosynthesis. This is 3-octaprenyl-4-hydroxybenzoate carboxy-lyase from Salmonella paratyphi A (strain ATCC 9150 / SARB42).